A 271-amino-acid chain; its full sequence is tRNA pseudouridine synthase A (271 aa).

D54 acts as the Nucleophile in catalysis. Substrate is bound at residue Y112.

The protein belongs to the tRNA pseudouridine synthase TruA family. In terms of assembly, homodimer.

It catalyses the reaction uridine(38/39/40) in tRNA = pseudouridine(38/39/40) in tRNA. Functionally, formation of pseudouridine at positions 38, 39 and 40 in the anticodon stem and loop of transfer RNAs. The polypeptide is tRNA pseudouridine synthase A (Acinetobacter baylyi (strain ATCC 33305 / BD413 / ADP1)).